The following is a 1048-amino-acid chain: Calcium-transporting ATPase, endoplasmic reticulum-type (1048 aa).

The Cytoplasmic portion of the chain corresponds to 1–63 (MEEKPFPAWS…WRLVLEQFDD (63 aa)). A helical membrane pass occupies residues 64 to 84 (TLVKILLGAAFISFVLAYVNQ). Residues 85-93 (DETGESGFE) are Lumenal-facing. Residues 94-114 (AYVEPLVILWILVLNAIVGVW) form a helical membrane-spanning segment. At 115–213 (QESNAEKALE…DCELQAKENM (99 aa)) the chain is on the cytoplasmic side. Residues 214 to 234 (VFAGTTVVNGSCICIVVNTGM) form a helical membrane-spanning segment. At 235–267 (CTEIGKIQRQIHDASMEESDTPLKKKLDEFGNR) the chain is on the lumenal side. Residues 268 to 288 (LTFAIGVVCLVVWAINYKYFL) form a helical membrane-spanning segment. Over 289-312 (SWEVVDDWPSDFRFSFEKCAYYFK) the chain is Cytoplasmic. The chain crosses the membrane as a helical span at residues 313–333 (IAVALAVAAIPEGLPSVITTC). Ca(2+) is bound by residues V319, A320, I322, and E324. Over 334-800 (LALGTRKMAQ…ISSNVGEVIS (467 aa)) the chain is Lumenal. Residue D366 is the 4-aspartylphosphate intermediate of the active site. Residues D728 and D732 each coordinate Mg(2+). Ca(2+) is bound by residues N794 and E797. Residues 801–821 (IFLTAVLGIPECLIPVQLLWV) traverse the membrane as a helical segment. Ca(2+)-binding residues include N822, T825, and D826. Residues 822 to 862 (NLVTDGPPATALGFNPADVDIMQKPPRKNTDALINSWVFFR) lie on the Cytoplasmic side of the membrane. A helical membrane pass occupies residues 863–883 (YMVIGSYVGIATVGIFIVWYT). Over 884-944 (QASFLGINIV…CEYFTVGKVK (61 aa)) the chain is Lumenal. Residues 945–965 (AMTLSLSVLVAIEMFNSLNAL) form a helical membrane-spanning segment. E957 contacts Ca(2+). Topologically, residues 966–981 (SEDNSLIKMPPWRNPW) are cytoplasmic. Residues 982-1002 (LLVAMSLSFALHSVILYVPFL) traverse the membrane as a helical segment. Over 1003–1007 (ADIFG) the chain is Lumenal. Residues 1008–1028 (IVPLSLYEWLLVILLSAPVIL) traverse the membrane as a helical segment. Residues 1029–1048 (IDEVLKFVGRRRRRTKLKAA) lie on the Cytoplasmic side of the membrane.

The protein belongs to the cation transport ATPase (P-type) (TC 3.A.3) family. Type IIA subfamily. In terms of tissue distribution, 9-fold higher level in roots compared with leaves.

Its subcellular location is the endoplasmic reticulum membrane. It carries out the reaction Ca(2+)(in) + ATP + H2O = Ca(2+)(out) + ADP + phosphate + H(+). Its function is as follows. This magnesium-dependent enzyme catalyzes the hydrolysis of ATP coupled with the translocation of calcium from the cytosol to an endomembrane compartment. The sequence is that of Calcium-transporting ATPase, endoplasmic reticulum-type from Solanum lycopersicum (Tomato).